Consider the following 417-residue polypeptide: Gamma-glutamyl phosphate reductase (417 aa).

The protein belongs to the gamma-glutamyl phosphate reductase family.

The protein resides in the cytoplasm. The catalysed reaction is L-glutamate 5-semialdehyde + phosphate + NADP(+) = L-glutamyl 5-phosphate + NADPH + H(+). The protein operates within amino-acid biosynthesis; L-proline biosynthesis; L-glutamate 5-semialdehyde from L-glutamate: step 2/2. Functionally, catalyzes the NADPH-dependent reduction of L-glutamate 5-phosphate into L-glutamate 5-semialdehyde and phosphate. The product spontaneously undergoes cyclization to form 1-pyrroline-5-carboxylate. The sequence is that of Gamma-glutamyl phosphate reductase from Klebsiella pneumoniae subsp. pneumoniae (strain ATCC 700721 / MGH 78578).